Consider the following 647-residue polypeptide: Threonine--tRNA ligase (647 aa).

A TGS domain is found at 1–63 (MEVRVEGQMV…PAGCTGIEPV (63 aa)). A catalytic region spans residues 244–535 (DHRKLGRELS…LVENFAGALP (292 aa)). Zn(2+)-binding residues include Cys336, His387, and His512.

The protein belongs to the class-II aminoacyl-tRNA synthetase family. As to quaternary structure, homodimer. Zn(2+) serves as cofactor.

The protein resides in the cytoplasm. The enzyme catalyses tRNA(Thr) + L-threonine + ATP = L-threonyl-tRNA(Thr) + AMP + diphosphate + H(+). Catalyzes the attachment of threonine to tRNA(Thr) in a two-step reaction: L-threonine is first activated by ATP to form Thr-AMP and then transferred to the acceptor end of tRNA(Thr). Also edits incorrectly charged L-seryl-tRNA(Thr). In Desulfovibrio desulfuricans (strain ATCC 27774 / DSM 6949 / MB), this protein is Threonine--tRNA ligase.